The chain runs to 47 residues: Delta-actitoxin-Aspp1b (47 aa).

3 disulfides stabilise this stretch: C4-C44, C6-C34, and C27-C45.

It belongs to the sea anemone sodium channel inhibitory toxin family. Type I subfamily.

It is found in the secreted. The protein localises to the nematocyst. Functionally, binds specifically to voltage-gated sodium channels (Nav), thereby delaying their inactivation during signal transduction. Has a longer mammalian heart stimulation effect than Hk2a, Hk8a and Hk16a. This is Delta-actitoxin-Aspp1b from Anthopleura sp. (strain 'Zhanjiang') (Sea anemone).